The sequence spans 230 residues: E3 ubiquitin-protein ligase RNF114 (230 aa).

The RING-type zinc-finger motif lies at 31–70; the sequence is CPVCLEVYEKPVQVPCGHVFCSACLQECLKPKKPVCGVCR. The Zn(2+) site is built by C93 and C96. The segment at 93 to 112 adopts a C2HC RNF-type zinc-finger fold; the sequence is CHGCRKNFFLSKIRAHVATC. K104 is modified (N6-acetyllysine). Zn(2+) is bound by residues H108 and C112. N6-acetyllysine is present on K114.

Interacts with XAF1, the interaction increases XAF1 stability and proapoptotic effects, and may regulate IFN signaling. Post-translationally, autoubiquitinated. Polyubiquitinated in the presence of E2 enzymes UBE2D1, UBE2D2 and UBE2D3, but only monoubiquitinated in the presence of UBE2E1.

The protein resides in the cytoplasm. It is found in the nucleus. The catalysed reaction is S-ubiquitinyl-[E2 ubiquitin-conjugating enzyme]-L-cysteine + [acceptor protein]-L-lysine = [E2 ubiquitin-conjugating enzyme]-L-cysteine + N(6)-ubiquitinyl-[acceptor protein]-L-lysine.. It functions in the pathway protein modification; protein ubiquitination. E3 ubiquitin-protein ligase that promotes the ubiquitination of various substrates. In turn, participates in the regulation of many biological processes including cell cycle, apoptosis, osteoclastogenesis as well as innate or adaptive immunity. Acts as negative regulator of NF-kappa-B-dependent transcription by promoting the ubiquitination and stabilization of the NF-kappa-B inhibitor TNFAIP3. May promote the ubiquitination of TRAF6 as well. Also acts as a negative regulator of T-cell activation. Inhibits cellular dsRNA responses and interferon production by targeting MAVS component for proteasomal degradation. Ubiquitinates the CDK inhibitor CDKN1A leading to its degradationand probably also CDKN1B and CDKN1C. This activity stimulates cell cycle G1-to-S phase transition and suppresses cellular senescence. May play a role in spermatogenesis. In Bos taurus (Bovine), this protein is E3 ubiquitin-protein ligase RNF114 (RNF114).